Reading from the N-terminus, the 389-residue chain is SH2 domain-containing protein 2A (389 aa).

Residues 41 to 63 (AASPQAPEAASNTGNAERAEEVP) form a disordered region. Positions 95–186 (WFHGFITRRE…PYGETLTEPL (92 aa)) constitute an SH2 domain. Positions 190-295 (TPEPAGLSLR…PIAFYAMGRG (106 aa)) are disordered. The segment covering 203-216 (SNFGSKSQDPNPQY) has biased composition (polar residues). Ser-217 is modified (phosphoserine). 2 short sequence motifs (SH3-binding) span residues 244-250 (RPKPPIP) and 272-278 (RPKPSNP). Residues 245 to 256 (PKPPIPAKPQLP) are compositionally biased toward pro residues. Ser-296 carries the post-translational modification Phosphoserine. A disordered region spans residues 324-389 (KSWSRPVPGG…QAWLPLGPPQ (66 aa)). Over residues 337–348 (GGSQLHSENSVI) the composition is skewed to polar residues. A compositionally biased stretch (pro residues) spans 352–361 (PPLPHQPPPA).

Interacts with KDR. Interacts with TXK and ITK. In terms of processing, phosphorylated on tyrosine residues. As to expression, expression limited to tissues of the immune system and, in particular, activated T-cells. Expressed in peripheral blood leukocytes, thymus and spleen. Much lower expression or undetectable, in brain, placenta, skeletal muscle, prostate, testis, ovary, small intestine, and colon. Expressed at low levels in unstimulated T-cells, but not expressed in normal resting or activated B-cells. According to PubMed:10692392, expression is not restricted to activated T-cells, but strongly expressed in blood cell lineages, the endothelium and other cell and tissue types, such as heart, lung, and liver.

The protein resides in the cytoplasm. Its function is as follows. Could be a T-cell-specific adapter protein involved in the control of T-cell activation. May play a role in the CD4-p56-LCK-dependent signal transduction pathway. Could also play an important role in normal and pathological angiogenesis. Could be an adapter protein that facilitates and regulates interaction of KDR with effector proteins important to endothelial cell survival and proliferation. The polypeptide is SH2 domain-containing protein 2A (SH2D2A) (Homo sapiens (Human)).